The primary structure comprises 388 residues: Na(+)/H(+) antiporter NhaA (388 aa).

Transmembrane regions (helical) follow at residues G14–T34, M59–V79, A95–F115, G125–G145, I154–F174, L179–L199, V219–L239, V254–V274, I292–L312, I328–L348, and W360–L380.

This sequence belongs to the NhaA Na(+)/H(+) (TC 2.A.33) antiporter family.

The protein resides in the cell inner membrane. The catalysed reaction is Na(+)(in) + 2 H(+)(out) = Na(+)(out) + 2 H(+)(in). In terms of biological role, na(+)/H(+) antiporter that extrudes sodium in exchange for external protons. This Salmonella choleraesuis (strain SC-B67) protein is Na(+)/H(+) antiporter NhaA.